The sequence spans 434 residues: Enolase (434 aa).

Gln-163 is a (2R)-2-phosphoglycerate binding site. Glu-205 functions as the Proton donor in the catalytic mechanism. Asp-242, Glu-291, and Asp-318 together coordinate Mg(2+). Residues Lys-343, Arg-372, Ser-373, and Lys-394 each contribute to the (2R)-2-phosphoglycerate site. Lys-343 serves as the catalytic Proton acceptor.

The protein belongs to the enolase family. Mg(2+) is required as a cofactor.

It localises to the cytoplasm. Its subcellular location is the secreted. The protein localises to the cell surface. The protein resides in the cell wall. It catalyses the reaction (2R)-2-phosphoglycerate = phosphoenolpyruvate + H2O. It participates in carbohydrate degradation; glycolysis; pyruvate from D-glyceraldehyde 3-phosphate: step 4/5. Catalyzes the reversible conversion of 2-phosphoglycerate (2-PG) into phosphoenolpyruvate (PEP). It is essential for the degradation of carbohydrates via glycolysis. In Streptococcus pneumoniae serotype 2 (strain D39 / NCTC 7466), this protein is Enolase.